The sequence spans 513 residues: ATP synthase subunit alpha 1 (513 aa).

An ATP-binding site is contributed by Gly169–Thr176.

The protein belongs to the ATPase alpha/beta chains family. F-type ATPases have 2 components, CF(1) - the catalytic core - and CF(0) - the membrane proton channel. CF(1) has five subunits: alpha(3), beta(3), gamma(1), delta(1), epsilon(1). CF(0) has three main subunits: a(1), b(2) and c(9-12). The alpha and beta chains form an alternating ring which encloses part of the gamma chain. CF(1) is attached to CF(0) by a central stalk formed by the gamma and epsilon chains, while a peripheral stalk is formed by the delta and b chains.

It is found in the cell inner membrane. It catalyses the reaction ATP + H2O + 4 H(+)(in) = ADP + phosphate + 5 H(+)(out). Functionally, produces ATP from ADP in the presence of a proton gradient across the membrane. The alpha chain is a regulatory subunit. The sequence is that of ATP synthase subunit alpha 1 from Burkholderia pseudomallei (strain 1710b).